A 405-amino-acid polypeptide reads, in one-letter code: Deoxyguanosinetriphosphate triphosphohydrolase-like protein (405 aa).

The HD domain occupies 75–219; that stretch reads RLTHTIEVAQ…AAIADDIAYN (145 aa).

The protein belongs to the dGTPase family. Type 2 subfamily.

This Sinorhizobium medicae (strain WSM419) (Ensifer medicae) protein is Deoxyguanosinetriphosphate triphosphohydrolase-like protein.